A 426-amino-acid polypeptide reads, in one-letter code: Probable imidazolonepropionase (426 aa).

Residues tyrosine 159 and histidine 192 each coordinate 4-imidazolone-5-propanoate. Tyrosine 159 provides a ligand contact to N-formimidoyl-L-glutamate. Position 260 (histidine 260) interacts with Fe(3+). Position 260 (histidine 260) interacts with Zn(2+). Residue glutamate 263 coordinates 4-imidazolone-5-propanoate. Aspartate 334 serves as a coordination point for Fe(3+). Aspartate 334 lines the Zn(2+) pocket. Asparagine 336 contributes to the N-formimidoyl-L-glutamate binding site.

The protein belongs to the metallo-dependent hydrolases superfamily. HutI family. The cofactor is Zn(2+). Requires Fe(3+) as cofactor.

It catalyses the reaction 4-imidazolone-5-propanoate + H2O = N-formimidoyl-L-glutamate. Its pathway is amino-acid degradation; L-histidine degradation into L-glutamate; N-formimidoyl-L-glutamate from L-histidine: step 3/3. The sequence is that of Probable imidazolonepropionase (AMDHD1) from Homo sapiens (Human).